Consider the following 65-residue polypeptide: Photosystem II reaction center protein J (65 aa).

Residues 35–55 (LWLVATAGGIAVIFVLGIFFY) traverse the membrane as a helical segment.

Belongs to the PsbJ family. PSII is composed of 1 copy each of membrane proteins PsbA, PsbB, PsbC, PsbD, PsbE, PsbF, PsbH, PsbI, PsbJ, PsbK, PsbL, PsbM, PsbT, PsbX, PsbY, Psb30/Ycf12, peripheral proteins PsbO, CyanoQ (PsbQ), PsbU, PsbV and a large number of cofactors. It forms dimeric complexes.

The protein localises to the cellular thylakoid membrane. Its function is as follows. One of the components of the core complex of photosystem II (PSII). PSII is a light-driven water:plastoquinone oxidoreductase that uses light energy to abstract electrons from H(2)O, generating O(2) and a proton gradient subsequently used for ATP formation. It consists of a core antenna complex that captures photons, and an electron transfer chain that converts photonic excitation into a charge separation. In Prochlorococcus marinus (strain MIT 9312), this protein is Photosystem II reaction center protein J.